Consider the following 325-residue polypeptide: Olfactory receptor 1S1 (325 aa).

The Extracellular portion of the chain corresponds to 1–38 (MKTFSSFLQIGRNMHQGNQTTITEFILLGFFKQDEHQN). The N-linked (GlcNAc...) asparagine glycan is linked to asparagine 18. The helical transmembrane segment at 39-62 (LLFVLFLGMYLVTVIGNGLIIVAI) threads the bilayer. The Cytoplasmic segment spans residues 63 to 70 (SLDTYLHT). A helical transmembrane segment spans residues 71–92 (PMYLFLANLSFADISSISNSVP). Residues 93 to 113 (KMLVNIQTKSQSISYESCITQ) are Extracellular-facing. A disulfide bridge connects residues cysteine 110 and cysteine 202. The chain crosses the membrane as a helical span at residues 114-133 (MYFSIVFVVIDNLLLGTMAY). The Cytoplasmic segment spans residues 134 to 152 (DHFVAICHPLNYTILMRPR). A helical transmembrane segment spans residues 153 to 171 (FGILLTVISWFLSNIIALT). The Extracellular segment spans residues 172–208 (HTLLLIQLLFCNHNTLPHFFCDLAPLLKLSCSDTLIN). Residues 209-232 (ELVLFIVGLSVIIFPFTLSFFSYV) traverse the membrane as a helical segment. The Cytoplasmic portion of the chain corresponds to 233–249 (CIIRAVLRVSSTQGKWK). A helical membrane pass occupies residues 250-272 (AFSTCGSHLTVVLLFYGTIVGVY). The Extracellular segment spans residues 273–285 (FFPSSTHPEDTDK). A helical membrane pass occupies residues 286–305 (IGAVLFTVVTPMINPFIYSL). Residues 306 to 325 (RNKDMKGALRKLINRKISSL) lie on the Cytoplasmic side of the membrane.

It belongs to the G-protein coupled receptor 1 family.

The protein localises to the cell membrane. Odorant receptor. The polypeptide is Olfactory receptor 1S1 (OR1S1) (Homo sapiens (Human)).